A 309-amino-acid polypeptide reads, in one-letter code: UDP-3-O-acyl-N-acetylglucosamine deacetylase (309 aa).

H78, H235, and D239 together coordinate Zn(2+). H262 functions as the Proton donor in the catalytic mechanism.

Belongs to the LpxC family. It depends on Zn(2+) as a cofactor.

The enzyme catalyses a UDP-3-O-[(3R)-3-hydroxyacyl]-N-acetyl-alpha-D-glucosamine + H2O = a UDP-3-O-[(3R)-3-hydroxyacyl]-alpha-D-glucosamine + acetate. It participates in glycolipid biosynthesis; lipid IV(A) biosynthesis; lipid IV(A) from (3R)-3-hydroxytetradecanoyl-[acyl-carrier-protein] and UDP-N-acetyl-alpha-D-glucosamine: step 2/6. Functionally, catalyzes the hydrolysis of UDP-3-O-myristoyl-N-acetylglucosamine to form UDP-3-O-myristoylglucosamine and acetate, the committed step in lipid A biosynthesis. The polypeptide is UDP-3-O-acyl-N-acetylglucosamine deacetylase (Syntrophotalea carbinolica (strain DSM 2380 / NBRC 103641 / GraBd1) (Pelobacter carbinolicus)).